The following is a 601-amino-acid chain: Oligoendopeptidase F, plasmid (601 aa).

Histidine 387 serves as a coordination point for Zn(2+). Glutamate 388 is an active-site residue. Residues histidine 391 and histidine 394 each coordinate Zn(2+).

Belongs to the peptidase M3B family. It depends on Zn(2+) as a cofactor.

Hydrolyzes peptides containing between 7 and 17 amino acids with a rather wide specificity. The protein is Oligoendopeptidase F, plasmid (pepF1) of Lactococcus lactis subsp. cremoris (Streptococcus cremoris).